The primary structure comprises 177 residues: Large ribosomal subunit protein uL10 (177 aa).

Belongs to the universal ribosomal protein uL10 family. Part of the ribosomal stalk of the 50S ribosomal subunit. The N-terminus interacts with L11 and the large rRNA to form the base of the stalk. The C-terminus forms an elongated spine to which L12 dimers bind in a sequential fashion forming a multimeric L10(L12)X complex.

Functionally, forms part of the ribosomal stalk, playing a central role in the interaction of the ribosome with GTP-bound translation factors. The chain is Large ribosomal subunit protein uL10 from Leptospira interrogans serogroup Icterohaemorrhagiae serovar copenhageni (strain Fiocruz L1-130).